Consider the following 385-residue polypeptide: 3-hydroxyisobutyryl-CoA hydrolase, mitochondrial (385 aa).

The transit peptide at 1–32 (MGQPYAWRLLSRVSSFRRASVILQHLRMSMHT) directs the protein to the mitochondrion. Residues Lys-54, Lys-91, and Lys-100 each carry the N6-acetyllysine; alternate modification. 3 positions are modified to N6-succinyllysine; alternate: Lys-54, Lys-91, and Lys-100. Residues Glu-120, Gly-145, Glu-168, and Asp-176 each contribute to the substrate site. Lys-220 is subject to N6-acetyllysine; alternate. Lys-220 bears the N6-succinyllysine; alternate mark. A Phosphoserine modification is found at Ser-233. An N6-succinyllysine mark is found at Lys-249 and Lys-256. Lys-296 carries the post-translational modification N6-acetyllysine; alternate. An N6-succinyllysine; alternate modification is found at Lys-296. Lys-300 is subject to N6-succinyllysine. The residue at position 352 (Lys-352) is an N6-acetyllysine; alternate. Lys-352 carries the N6-succinyllysine; alternate modification. Lys-359 and Lys-364 each carry N6-acetyllysine. Lys-376 is modified (N6-succinyllysine).

The protein belongs to the enoyl-CoA hydratase/isomerase family.

It is found in the mitochondrion. It catalyses the reaction 3-hydroxy-2-methylpropanoyl-CoA + H2O = 3-hydroxy-2-methylpropanoate + CoA + H(+). It functions in the pathway amino-acid degradation; L-valine degradation. Its function is as follows. Hydrolyzes 3-hydroxyisobutyryl-CoA (HIBYL-CoA), a saline catabolite. Has high activity toward isobutyryl-CoA. Could be an isobutyryl-CoA dehydrogenase that functions in valine catabolism. Also hydrolyzes 3-hydroxypropanoyl-CoA. The chain is 3-hydroxyisobutyryl-CoA hydrolase, mitochondrial (Hibch) from Mus musculus (Mouse).